A 584-amino-acid polypeptide reads, in one-letter code: Proline--tRNA ligase (584 aa).

The protein belongs to the class-II aminoacyl-tRNA synthetase family. ProS type 1 subfamily. In terms of assembly, homodimer.

It localises to the cytoplasm. It catalyses the reaction tRNA(Pro) + L-proline + ATP = L-prolyl-tRNA(Pro) + AMP + diphosphate. Catalyzes the attachment of proline to tRNA(Pro) in a two-step reaction: proline is first activated by ATP to form Pro-AMP and then transferred to the acceptor end of tRNA(Pro). As ProRS can inadvertently accommodate and process non-cognate amino acids such as alanine and cysteine, to avoid such errors it has two additional distinct editing activities against alanine. One activity is designated as 'pretransfer' editing and involves the tRNA(Pro)-independent hydrolysis of activated Ala-AMP. The other activity is designated 'posttransfer' editing and involves deacylation of mischarged Ala-tRNA(Pro). The misacylated Cys-tRNA(Pro) is not edited by ProRS. This is Proline--tRNA ligase from Mycobacterium sp. (strain KMS).